A 125-amino-acid polypeptide reads, in one-letter code: Succinate dehydrogenase hydrophobic membrane anchor subunit (125 aa).

Over 1-24 (MTYDFRAEIVKAKNTGSAKSGSHH) the chain is Cytoplasmic. A helical membrane pass occupies residues 25–45 (WLLQRITAIILVLCSLWLLYF). The Periplasmic portion of the chain corresponds to 46 to 67 (TLANKNSDVNIIIWELKRPINL). The chain crosses the membrane as a helical span at residues 68-89 (IPLLIAVITSLYHAMLGMQVVI). His80 lines the heme pocket. At 90–99 (EDYISCNKLR) the chain is on the cytoplasmic side. Residue Tyr92 participates in a ubiquinone binding. A helical membrane pass occupies residues 100–123 (NTLIIAVKLFSILTIVAFIVAVFY).

As to quaternary structure, part of an enzyme complex containing four subunits: a flavoprotein, an iron-sulfur protein, plus two membrane-anchoring proteins, SdhC and SdhD. Requires heme as cofactor.

The protein localises to the cell inner membrane. It participates in carbohydrate metabolism; tricarboxylic acid cycle. Membrane-anchoring subunit of succinate dehydrogenase (SDH). The protein is Succinate dehydrogenase hydrophobic membrane anchor subunit (sdhD) of Rickettsia bellii (strain RML369-C).